A 495-amino-acid chain; its full sequence is Ribose import ATP-binding protein RbsA (495 aa).

ABC transporter domains lie at 7-242 (LEMR…VGRP) and 250-491 (ERDI…TGVN). Residue 39–46 (GENGAGKS) participates in ATP binding.

The protein belongs to the ABC transporter superfamily. Ribose importer (TC 3.A.1.2.1) family. In terms of assembly, the complex is composed of an ATP-binding protein (RbsA), two transmembrane proteins (RbsC) and a solute-binding protein (RbsB).

It is found in the cell inner membrane. The catalysed reaction is D-ribose(out) + ATP + H2O = D-ribose(in) + ADP + phosphate + H(+). In terms of biological role, part of the ABC transporter complex RbsABC involved in ribose import. Responsible for energy coupling to the transport system. The sequence is that of Ribose import ATP-binding protein RbsA from Shigella dysenteriae serotype 1 (strain Sd197).